The primary structure comprises 1165 residues: MALRFILGRAGTGKTRLCLEEIRKELRQAPDGPPLVFLVPEQATFQTEYALALTPGLSGMFRAQVLSFRRLAWRVFSEVGGAARPHVGDVGKRMMLARILARRRNELRLFGRAAGQYGFSGTLAGVLSELKTYLVTPEALEQAVRMLPGTAETDSLQAKLEDLRLLYTDFERELAGKYIDPDDYLTLLAARLGESPTLRAAEVWVDGFAGFTPQEYAVLEALLKAAARVNVALCLDPRSGRREDLELFQVTRDTRARLAELARKNGVELERPVELAGPPARFRANPALAHLEREFFRRPTKKFAGPPENLRLVAAASRRAEVEGAAREILRLSRERGWRWRDVSLVVRNLADYHELVATVFADYGIPCFIDRKRPVRHHPLVELIRSALETVTENWTYDPVFRYLKTDLVPVSRGDVDLLENYVLAHGIKGAKWADPEDWHYRRSDALNRPVPNGTGAPAPSDRDRYLREKVNRIRRRAARHLLDFQRRVQAAGTVRELTAALYDLLSDLDVPGRIEEWSREAETEGRLEAAREHRQLWDGVVELLDQVVETLGDEALTPEEYGRILDSGMDGLQLALIPPALDQVLVGSLERSRNPDIRAAFVLGVSEGVLPGRHGGTGLFTDREREVLLAAGLEVAPDTRRKVYEEQYLVYIALTRAGHYLWVSYPLADEEGGALAPSSVIPRLRELFPGLREETLALEPEGTAPGADLPYVTAPGRTLGFLVTRLRDWKSGVTVDPVWWSVFNWFAAHAGWRERCAPVLAGLFYENREPRLDPELTPELYGSRLVVSVSRLEEFRGCPFAHFARYALRLKERDVCRLAAPDIGLFFHAALKTFEDRLREAGMEWDALESADCTRLASAVVEELAPQLQSEVLLSSPRLRFLTGKLERVVERTAGVMAAHARHSRFQPVAVEVAFGPGRDVPGPAYPLPGGGSVELAGRIDRVDVAHTDNAAYLRVIDYKAGPRSLALDDVYYGLNLQLLVYLEAGLREAAALAGRECRPAGAFYFRVQNPLLKGGTPVPPAEVAPRLLKAFRLQGLVLDDPALLRLMDDAIGSESAIVPAGLKQDGTVKKKPGVVSAAQLERLQEHVRRVVAETAAEIQAGVVAIAPYRKGQANACRYCAFKPVCAFDPLLESNRYRQLRALTAGELWRLLGLPEEDEPGDE.

The region spanning 1-298 (MALRFILGRA…AHLEREFFRR (298 aa)) is the UvrD-like helicase ATP-binding domain. ATP is bound at residue 8–15 (GRAGTGKT). A UvrD-like helicase C-terminal domain is found at 279–584 (PARFRANPAL…QLALIPPALD (306 aa)). [4Fe-4S] cluster contacts are provided by Cys800, Cys1119, Cys1122, and Cys1128.

It belongs to the helicase family. AddB/RexB type 1 subfamily. As to quaternary structure, heterodimer of AddA and AddB. Mg(2+) is required as a cofactor. [4Fe-4S] cluster serves as cofactor.

Functionally, the heterodimer acts as both an ATP-dependent DNA helicase and an ATP-dependent, dual-direction single-stranded exonuclease. Recognizes the chi site generating a DNA molecule suitable for the initiation of homologous recombination. The AddB subunit has 5' -&gt; 3' nuclease activity but not helicase activity. This chain is ATP-dependent helicase/deoxyribonuclease subunit B, found in Desulforudis audaxviator (strain MP104C).